We begin with the raw amino-acid sequence, 196 residues long: DNA replication complex GINS protein PSF1 (196 aa).

Belongs to the GINS1/PSF1 family. Component of the GINS complex which is a heterotetramer of gins1/psf1, gins2/psf2, gins3/psf3 and gins4/sld5. Component of the CMG helicase complex, composed of the mcm2-7 complex, the GINS complex and cdc45.

It localises to the nucleus. The protein resides in the chromosome. In terms of biological role, required for correct functioning of the GINS complex, a complex that plays an essential role in the initiation of DNA replication, and progression of DNA replication forks. GINS complex is a core component of CDC45-MCM-GINS (CMG) helicase, the molecular machine that unwinds template DNA during replication, and around which the replisome is built. This is DNA replication complex GINS protein PSF1 from Xenopus laevis (African clawed frog).